A 1088-amino-acid chain; its full sequence is MSSVSIQIPLPTPPPTQAHNSQTFCAPPLGSLTLPEVFDWHSKNSPNHPLYSYINIDGSIRTITWAESVRAVHRAARRMRTELGLSSDSVPDLTAGKPVVGILAVLDSITYSTLVTGVQYAGFTPFPISPRNSHAAVVHLINKAFVSHIIVEESCRGLLEDAFQSLKSDLTSPSMPTTSVAPVFEDLYVSSDSAQGEASVAFETPAWDSNAIIIHSSGSTAFPKPIAWTHGRAMQLSTVPWYGERDLTGKRMACHAMPMYHTMGYLLLAWAASSGLVLNGFRPQSPATKSTIENVFSASLEAHSDIIFTVPSFVEAWSKNPAYVKTLAELDGVMFGGGPLGKQVGDVLVSANVTLFNLYGSTEAGVLSSTVPADFNIDWEYFRISDIAKVAFVPNEENKLELVVLSSNLNTPSVFNAVYEDVPAYATSDLFEPHPTKPGYWKIFGRTDDQIMHSTGEKTNPGPLEHILNQDPHVRASLMFGRGQFQAGVLVDPTSEYRFDPSDEEKLAEFRNLIWPSVEEMNAYAPQHSRVFKEMILVSSPSKPFTFTAKNSVRRQAVIQEYDDEIKAIYFAVDETGRADIPSPTAWDSAKTLGFIRAVVQKVMKKEVQDGDDFFQHGCDSLQATWIRNTILRSLKDSTDANTQDISNSFIYQHPSVASLASFVSSVAQGQNNINSGLDRAQEMNIMVARYSKDFPPHVPSAPQPSKDTILLTGSTGALGSNILALLIASPSVARIYAFNRKSRSSIPLLDRQKSALLERGLDPSLAASKKVVLVEGDVTKQDLGISTELLSEIRVSITHIIHNAWPVNFNLSLESFEPQVKGLRHLVDLSLSSPHPSPPRVLFTASIGMFNDITRAEPVKEVPIGANVAVSNGYGESKWVGETILAEAAKQTPLRSTSIRVGQLSGGINGAWTTAEWLPSLVRSAIHLKALPDCEGDVSWIPVNVAAAAIVDFCQSDSSIMNLVHPRPATWSSIFSAFASVLNIPLVPYTEWLALLRKSAEDAGDAPDADSLQQNPGLRLLDWYHSAFVHENDSAYQYADTMGFPKFDMTNSLRASGTLADEGLPQLGESDVKLWVDYWKKVGFFPA.

The disordered stretch occupies residues 1 to 22 (MSSVSIQIPLPTPPPTQAHNSQ). Positions 38-451 (FDWHSKNSPN…KIFGRTDDQI (414 aa)) are adenylation (A) domain. Residues H261, 357-358 (NL), T362, and 443-446 (IFGR) each bind AMP. One can recognise a Carrier domain in the interval 586–668 (AWDSAKTLGF…SLASFVSSVA (83 aa)). O-(pantetheine 4'-phosphoryl)serine is present on S621. Residues 712 to 951 (LTGSTGALGS…IPVNVAAAAI (240 aa)) form a reductase (R) domain region. NADP(+)-binding positions include 716–719 (TGAL), 804–806 (NAW), Y875, and K879.

This sequence belongs to the adenylate-forming reductase family.

Adenylate-forming reductase, a natural product biosynthesis enzyme that resembles non-ribosomal peptide synthetases, yet serves to modify one substrate, rather than to condense two or more building blocks. The A-domain preferentially accepts phenylpyruvic acid and benzoic acid as substrate. The natural product of the enzyme is not yet known. The chain is Adenylate-forming reductase Nps10 from Heterobasidion annosum (Root rot fungus).